Reading from the N-terminus, the 224-residue chain is MPQSPRPVPSWALLLRLLALLRPPGLGEACSCAPAHPQQHVCHSALAIRAKISSEKVVPASTDPADPQKMIRYEIKQIKMFKGFEKVNDIQYIYTPFDSSLCGVKLEANSQKRYLLTGQILSDGKVFVHLCNYIEPWENLSFLQRESLNHHYHLNCGCQITTCYAVPCTISAPNECLWTDWLLERKLYGYQAQHYVCMKHVDGSCSWYQGRLPLRKEFVDIIQP.

A signal peptide spans 1-29 (MPQSPRPVPSWALLLRLLALLRPPGLGEA). Residue Cys-30 participates in Zn(2+) binding. Involved in metalloproteinase-binding stretches follow at residues 30–33 (CSCA) and 99–100 (SS). 6 cysteine pairs are disulfide-bonded: Cys-30–Cys-102, Cys-32–Cys-131, Cys-42–Cys-156, Cys-158–Cys-205, Cys-163–Cys-168, and Cys-176–Cys-197. The NTR domain maps to 30–156 (CSCAPAHPQQ…SLNHHYHLNC (127 aa)).

Belongs to the protease inhibitor I35 (TIMP) family.

The protein localises to the secreted. Complexes with metalloproteinases (such as collagenases) and irreversibly inactivates them by binding to their catalytic zinc cofactor. The sequence is that of Metalloproteinase inhibitor 4 (TIMP4) from Bos taurus (Bovine).